The chain runs to 491 residues: Putative ABC transporter ATP-binding protein TDE_0906 (491 aa).

ABC transporter domains are found at residues 2 to 241 and 267 to 491; these read INLN…KQGL and LTLH…KERL. ATP is bound by residues 36–43 and 300–307; these read GKSGCGKT and GKNGCGKT.

The protein belongs to the ABC transporter superfamily.

Its subcellular location is the cell inner membrane. Functionally, probably part of an ABC transporter complex. Responsible for energy coupling to the transport system. The polypeptide is Putative ABC transporter ATP-binding protein TDE_0906 (Treponema denticola (strain ATCC 35405 / DSM 14222 / CIP 103919 / JCM 8153 / KCTC 15104)).